Consider the following 119-residue polypeptide: Large ribosomal subunit protein bL20 (119 aa).

It belongs to the bacterial ribosomal protein bL20 family.

In terms of biological role, binds directly to 23S ribosomal RNA and is necessary for the in vitro assembly process of the 50S ribosomal subunit. It is not involved in the protein synthesizing functions of that subunit. The protein is Large ribosomal subunit protein bL20 of Methylocella silvestris (strain DSM 15510 / CIP 108128 / LMG 27833 / NCIMB 13906 / BL2).